Consider the following 249-residue polypeptide: MADADSWDADSFEPEEPIKKAAVHDKWEGEDEDDDVKDNWDDDEEEEKEEEEEKKTEAKPTEKKKLSEKIKEKENLQRKKQEELRKQQLEETKRDTPLTPEDELAEKLRVKQLQEDSDLELAKEAFGVVSNNVTGIDAVSPSSKDDFTEFERLLKEKISPYEKSIHYSGFLETLFRDLCLSLEVEDLKKINNSLTVLLSEKQRQEKANKGKKKKKGVLPGGGLKAKMKDDLADYGGFDGGYAQDYEDFM.

Positions 1–15 (MADADSWDADSFEPE) are enriched in acidic residues. Residues 1–104 (MADADSWDAD…DTPLTPEDEL (104 aa)) are disordered. The segment covering 16–27 (EPIKKAAVHDKW) has biased composition (basic and acidic residues). A compositionally biased stretch (acidic residues) spans 28–52 (EGEDEDDDVKDNWDDDEEEEKEEEE). A coiled-coil region spans residues 34 to 96 (DDVKDNWDDD…QQLEETKRDT (63 aa)). Positions 53 to 96 (EKKTEAKPTEKKKLSEKIKEKENLQRKKQEELRKQQLEETKRDT) are enriched in basic and acidic residues.

The protein belongs to the eIF-3 subunit J family. As to quaternary structure, component of the eukaryotic translation initiation factor 3 (eIF-3) complex, which is composed of 13 subunits: eif3a, eif3b, eif3c, eif3d, eif3e, eif3f, eif3g, eif3h, eif3i, eif3j, eif3k, eif3l and eif3m.

Its subcellular location is the cytoplasm. Its function is as follows. Component of the eukaryotic translation initiation factor 3 (eIF-3) complex, which is involved in protein synthesis of a specialized repertoire of mRNAs and, together with other initiation factors, stimulates binding of mRNA and methionyl-tRNAi to the 40S ribosome. The eIF-3 complex specifically targets and initiates translation of a subset of mRNAs involved in cell proliferation. The sequence is that of Eukaryotic translation initiation factor 3 subunit J-A (eif3ja) from Danio rerio (Zebrafish).